The sequence spans 222 residues: Deoxyribose-phosphate aldolase (222 aa).

The active-site Proton donor/acceptor is the aspartate 89. Lysine 152 (schiff-base intermediate with acetaldehyde) is an active-site residue. Lysine 181 acts as the Proton donor/acceptor in catalysis.

It belongs to the DeoC/FbaB aldolase family. DeoC type 1 subfamily.

It is found in the cytoplasm. It carries out the reaction 2-deoxy-D-ribose 5-phosphate = D-glyceraldehyde 3-phosphate + acetaldehyde. Its pathway is carbohydrate degradation; 2-deoxy-D-ribose 1-phosphate degradation; D-glyceraldehyde 3-phosphate and acetaldehyde from 2-deoxy-alpha-D-ribose 1-phosphate: step 2/2. Its function is as follows. Catalyzes a reversible aldol reaction between acetaldehyde and D-glyceraldehyde 3-phosphate to generate 2-deoxy-D-ribose 5-phosphate. This Alkaliphilus oremlandii (strain OhILAs) (Clostridium oremlandii (strain OhILAs)) protein is Deoxyribose-phosphate aldolase.